The sequence spans 615 residues: SLPLHVLAHPQPSTSTSLAGRAGAVDLNEFRVAHRSSYASHDEMKKLPSIASFRQGTYLEVATELVKQTMPNMEFRLVDDHYVGDSGIGHVRFRQTMHGIDIDNSDFNVNVGKDGKILSHGNSFYTGPAPASNPMIKRDFIDPMQALNGVRKALNLPVKADGAHVENMSEHKVMFKGTSGALSDPTAKLCYMAKEDGSLALTWRVETDIGDNWLLSYMDAKESSKVHNVVDYVAHATFQVYKWGLADPTEGKRDILTNPWNLKTSPLTWLADGKTNFTATRGNNAIAQYNPDGGNDYENNYRPSPKNLKFEYPYSPDMNPPKTYIDASVTQLFYTSNVCHDLYYMLGFNEKAGNFQVNNRGQGGKGNDYVILNAQDGSGTNNANFATPPDGQPGRMRAYIWTRANPPRDASFEAGTIIHEYTHGLSNRLCGGPANSRCLNALESGGMGEGWGDFYATAVRLKPNDTRKTNYVKGGWVNNSPKGVRMYPYSTDMNVNPLVYTSNNKLNEVHAIGTVWCTMLYEVLWNLIDKHGKNDGPVPVFENGVPNDGKYLAMKLVMDGMAIQPCNPNFVQARDAILDADMNLTKGANKCEIWKGFAKRGLGVGAKFDPKNRTG.

An N-terminal signal peptide occupies residues 1-8 (SLPLHVLA). A propeptide spanning residues 9–235 (HPQPSTSTSL…VHNVVDYVAH (227 aa)) is cleaved from the precursor. The N-linked (GlcNAc...) asparagine glycan is linked to N276. A Zn(2+)-binding site is contributed by H419. E420 is a catalytic residue. H423 is a binding site for Zn(2+). N464, N583, and N612 each carry an N-linked (GlcNAc...) asparagine glycan.

It belongs to the peptidase M36 family. Zn(2+) serves as cofactor.

Its subcellular location is the secreted. In terms of biological role, secreted metalloproteinase probably acting as a virulence factor. This chain is Extracellular metalloproteinase 1 (MEP1), found in Trichophyton equinum (Horse ringworm fungus).